A 196-amino-acid chain; its full sequence is Calcineurin B homologous protein 2 (196 aa).

Residue glycine 2 is the site of N-myristoyl glycine attachment. 4 consecutive EF-hand domains span residues 26–61 (ASLLRLYHRFQALDRDEKGFLSRLDLQQIGALAVNP), 71–106 (FPNGSQRLYFAGFARVLAYFRPIDEEDATLRDPKQP), 111–146 (SRMNKLRFAFQLYDLDRDGKISRNEMLQVLRLMVGV), and 152–187 (QLESITDRTVQEADEDGDGAVSFLEFTKSLEKMNIE). The residue at position 27 (serine 27) is a Phosphoserine. The Ca(2+) site is built by aspartate 124, aspartate 126, aspartate 128, lysine 130, and glutamate 135. The Nuclear export signal signature appears at 137 to 148 (LQVLRLMVGVQV). Residues aspartate 165, aspartate 167, aspartate 169, and glutamate 176 each contribute to the Ca(2+) site.

This sequence belongs to the calcineurin regulatory subunit family. CHP subfamily. In terms of assembly, interacts with PPP3CA. Interacts with SLC9A1/NHE1; the interaction occurs in a calcium-dependent manner. Interacts with SLC9A1/NHE1.

The protein localises to the cytoplasm. Its subcellular location is the nucleus. It is found in the cell membrane. Functions as an integral cofactor in cell pH regulation by controlling plasma membrane-type Na(+)/H(+) exchange activity. Binds to and activates SLC9A1/NHE1 in a serum-independent manner, thus increasing pH and protecting cells from serum deprivation-induced death. Also plays a role in the regulation of cell proliferation and tumor growth by increasing the phosphatase activity of PPP3CA in a calcium-dependent manner. Activator of the calcineurin/NFAT signaling pathway. Involved in the cytoplasmic translocation of the transcription factor NFATC3 to the nucleus. The chain is Calcineurin B homologous protein 2 (Chp2) from Mus musculus (Mouse).